The chain runs to 497 residues: Serine hydroxymethyltransferase (497 aa).

Residues L176 and 180-182 each bind (6S)-5,6,7,8-tetrahydrofolate; that span reads GHL. Position 289 is an N6-(pyridoxal phosphate)lysine (K289).

The protein belongs to the SHMT family. In terms of assembly, homodimer. Pyridoxal 5'-phosphate is required as a cofactor.

The protein resides in the cytoplasm. It carries out the reaction (6R)-5,10-methylene-5,6,7,8-tetrahydrofolate + glycine + H2O = (6S)-5,6,7,8-tetrahydrofolate + L-serine. Its pathway is one-carbon metabolism; tetrahydrofolate interconversion. The protein operates within amino-acid biosynthesis; glycine biosynthesis; glycine from L-serine: step 1/1. In terms of biological role, catalyzes the reversible interconversion of serine and glycine with tetrahydrofolate (THF) serving as the one-carbon carrier. This reaction serves as the major source of one-carbon groups required for the biosynthesis of purines, thymidylate, methionine, and other important biomolecules. Also exhibits THF-independent aldolase activity toward beta-hydroxyamino acids, producing glycine and aldehydes, via a retro-aldol mechanism. The polypeptide is Serine hydroxymethyltransferase (Chlamydia caviae (strain ATCC VR-813 / DSM 19441 / 03DC25 / GPIC) (Chlamydophila caviae)).